Reading from the N-terminus, the 942-residue chain is MAGLARGDSRGRPPELPGDLSSQEEEEEEGDSDAGASSLGSYSSASSDTDVEPEWLDSVQKNGELFYLELSEDEEESLLPETQTANHVNHVRFSDKEVIIEEDDSRERKKSEPKLRRFTKILKSKSLLPRRHHKKSSSNNGPVSILKHQSSQKTGVTVQQRYKDVTVYINPRKLTAIKAREQVKLLEVLVGIIHQTKRSWKRSAKQADGERLVVHGLLPGGSAMKSGQVLVGDVLVAVNDVDVTSENIERVLSCIPGPMQVKLTFENAYAVKRETAQPQKKKAQSSTQDLVKLLCGSEADAVQHSTLSIPHISMYLTLQLQSEAAREEQEILYHYPVSEASQKLKSVRGIFLTLCDMLESVTGTQVTSSSLHLNGKQIHVAYLKESDKLLLIGLPAEEVPLPQLRNMIEDVAQTLKFMYGSLDSAFCQVENAPRLDHFFSLFFERALRPGKLHLSGSPSAQQYAAASAVLLDNLPGVRWLVLPQELKVELDTALSDLEAADFEELSEDYYDMRRLYTILGSSLFYKGYMVCSHLPKDDVIEIAAYCRQHCLLPLAAKQRIGQLIIWREVFPRHHLQPPSDSDPEAFQEPEGRYFLLVVGLRHYLLCVLLEAGGCASKATGNPGPDCIYVDQVRATLHQLEGVDSRIEEQLATSPGPCLSCADWFLAAPREKADSLTTSPILSRLQGPSKTAASPTCRRTFFSDYSFKARKPSPSRIGGGREPTEGEESAGLSPHATPDAVRKQRESEGSDDNVALLKLARKKSTLPNPFHLGTSKKELSEKELEVYDIMKLTSGPENTLFHYVALETVQGIFITPTHEEVAQLGGSVHSQLIKNFHQCCLSIRAFFQQTLKEEKKKALSDGEHSEPTNSVSSLSPVKEHGVLFECSPENWTDQKKTPPVMSYWVVGRLFLNPKPQELYVCFHDSVSEIAIEMAFKLFFGLTL.

Disordered stretches follow at residues 1-56 (MAGL…PEWL) and 128-156 (LPRR…KTGV). The segment covering 22-32 (SQEEEEEEGDS) has biased composition (acidic residues). A compositionally biased stretch (low complexity) spans 33–48 (DAGASSLGSYSSASSD). Positions 137 to 156 (SSNNGPVSILKHQSSQKTGV) are enriched in polar residues. The region spanning 185–267 (LLEVLVGIIH…PMQVKLTFEN (83 aa)) is the PDZ domain. Serine 674 and serine 678 each carry phosphoserine. The interval 707–751 (KARKPSPSRIGGGREPTEGEESAGLSPHATPDAVRKQRESEGSDD) is disordered.

This sequence belongs to the inturned family. In terms of assembly, component of the CPLANE (ciliogenesis and planar polarity effectors) complex, composed of INTU, FUZ and WDPCP. Interacts with CPLANE1. Interacts with NPHP4 and DAAM1; INTU is mediating the interaction between NPHP4 and DAAM1. In terms of tissue distribution, widely expressed in E8.5 and E9.5 wild type embryos. Present in various adult organs (at protein level).

The protein resides in the cytoplasm. Its subcellular location is the cell surface. It localises to the cytoskeleton. The protein localises to the cilium basal body. It is found in the microtubule organizing center. The protein resides in the centrosome. Its subcellular location is the centriole. Plays a key role in ciliogenesis and embryonic development. Regulator of cilia formation by controlling the organization of the apical actin cytoskeleton and the positioning of the basal bodies at the apical cell surface, which in turn is essential for the normal orientation of elongating ciliary microtubules. Plays a key role in definition of cell polarity via its role in ciliogenesis but not via conversion extension. Has an indirect effect on hedgehog signaling. Proposed to function as core component of the CPLANE (ciliogenesis and planar polarity effectors) complex involved in the recruitment of peripheral IFT-A proteins to basal bodies. Required for recruitment of CPLANE2 to the mother centriole. Binds phosphatidylinositol 3-phosphate with highest affinity, followed by phosphatidylinositol 4-phosphate and phosphatidylinositol 5-phosphate. This chain is Protein inturned (Intu), found in Mus musculus (Mouse).